A 475-amino-acid polypeptide reads, in one-letter code: ATP synthase subunit beta, chloroplastic (475 aa).

ATP is bound at residue 155–162 (GGAGVGKT).

This sequence belongs to the ATPase alpha/beta chains family. As to quaternary structure, F-type ATPases have 2 components, CF(1) - the catalytic core - and CF(0) - the membrane proton channel. CF(1) has five subunits: alpha(3), beta(3), gamma(1), delta(1), epsilon(1). CF(0) has four main subunits: a(1), b(1), b'(1) and c(9-12).

Its subcellular location is the plastid. It is found in the chloroplast thylakoid membrane. The catalysed reaction is ATP + H2O + 4 H(+)(in) = ADP + phosphate + 5 H(+)(out). Its function is as follows. Produces ATP from ADP in the presence of a proton gradient across the membrane. The catalytic sites are hosted primarily by the beta subunits. The polypeptide is ATP synthase subunit beta, chloroplastic (Ochrosphaera neapolitana).